A 113-amino-acid chain; its full sequence is Hydrogenase maturation factor HybF (113 aa).

Ni(2+) is bound by residues H2 and E3. 4 residues coordinate Zn(2+): C73, C76, C89, and C92.

The protein belongs to the HypA/HybF family. HybF subfamily.

Its function is as follows. Involved in the maturation of [NiFe] hydrogenases. Required for nickel insertion into the metal center of the hydrogenase. This chain is Hydrogenase maturation factor HybF, found in Salmonella typhi.